The primary structure comprises 256 residues: uncharacterized protein (256 aa).

Transmembrane regions (helical) follow at residues 181-201 and 231-251; these read CCII…ASMV and GIAV…GLIA.

The protein localises to the cell membrane. This is an uncharacterized protein from Methanocaldococcus jannaschii (strain ATCC 43067 / DSM 2661 / JAL-1 / JCM 10045 / NBRC 100440) (Methanococcus jannaschii).